The following is a 384-amino-acid chain: NADP-dependent alcohol dehydrogenase 3 (384 aa).

The protein belongs to the iron-containing alcohol dehydrogenase family.

The catalysed reaction is a primary alcohol + NADP(+) = an aldehyde + NADPH + H(+). In terms of biological role, has NADP-dependent alcohol dehydrogenase activity. The protein is NADP-dependent alcohol dehydrogenase 3 of Entamoeba histolytica (strain ATCC 30459 / HM-1:IMSS / ABRM).